A 516-amino-acid chain; its full sequence is High-affinity nitrate transporter 2.3 (516 aa).

A run of 12 helical transmembrane segments spans residues 52–72, 76–96, 112–132, 142–162, 172–192, 209–229, 265–285, 299–319, 335–354, 367–387, 395–415, and 425–445; these read WFSF…LPLI, LGLT…GAVF, LASA…SIIQ, FFTG…SSMF, GVAG…MPLV, IAFF…LAFG, WILA…DNVV, TAGL…PGGG, LWGL…VLGI, VLFS…VPFV, ISGM…YIFF, and GIKY…LIYF. The segment at 489 to 516 is disordered; the sequence is SVREGGRSSANGGQPRHTVPVDASPAGV.

The protein belongs to the major facilitator superfamily. Nitrate/nitrite porter (TC 2.A.1.8) family. In terms of assembly, heterotetramer composed of two NRT2.3 and two NAR2.1. Isoform 1 interacts with NAR2.1, but not isoform 2. Expressed in the stelar cells of both primary and lateral roots, particularly at the site of lateral root emergence, root-shoot junction zone, vascular tissues of adventitious root primordia, leaves, germ tips and seed scutellum.

The protein resides in the cell membrane. In terms of biological role, involved in nitrate transport, but does not seem to be able to mediate transport by its own. Acts as a dual component transporter with NAR2.1. Imports nitrate with high affinity when expressed with NAR2.1 in a heterologous system (Xenopus oocytes). Plays a key role in long-distance nitrate transport from root to shoot particularly at low external nitrate supply. This Oryza sativa subsp. japonica (Rice) protein is High-affinity nitrate transporter 2.3 (NRT2.3).